The following is a 205-amino-acid chain: Holliday junction branch migration complex subunit RuvA (205 aa).

The interval 1–64 (MIGRIRGLLV…EDAQLLYGFI (64 aa)) is domain I. The domain II stretch occupies residues 65–143 (SKQERALFRL…SLMEASVGSE (79 aa)). The segment at 144–156 (REFMLQSNYTAPV) is flexible linker. Residues 157-205 (VANTAEEDAIAALLSLGYKPAQASKAVSAVYVDGIDSESLIKSALKSML) form a domain III region.

Belongs to the RuvA family. Homotetramer. Forms an RuvA(8)-RuvB(12)-Holliday junction (HJ) complex. HJ DNA is sandwiched between 2 RuvA tetramers; dsDNA enters through RuvA and exits via RuvB. An RuvB hexamer assembles on each DNA strand where it exits the tetramer. Each RuvB hexamer is contacted by two RuvA subunits (via domain III) on 2 adjacent RuvB subunits; this complex drives branch migration. In the full resolvosome a probable DNA-RuvA(4)-RuvB(12)-RuvC(2) complex forms which resolves the HJ.

The protein localises to the cytoplasm. Its function is as follows. The RuvA-RuvB-RuvC complex processes Holliday junction (HJ) DNA during genetic recombination and DNA repair, while the RuvA-RuvB complex plays an important role in the rescue of blocked DNA replication forks via replication fork reversal (RFR). RuvA specifically binds to HJ cruciform DNA, conferring on it an open structure. The RuvB hexamer acts as an ATP-dependent pump, pulling dsDNA into and through the RuvAB complex. HJ branch migration allows RuvC to scan DNA until it finds its consensus sequence, where it cleaves and resolves the cruciform DNA. This Shewanella piezotolerans (strain WP3 / JCM 13877) protein is Holliday junction branch migration complex subunit RuvA.